The chain runs to 282 residues: Chromatin modification-related protein YNG2 (282 aa).

Positions 35–86 (LIEEKKKYEQKESQIHKFIRQQGSIPKHPQEDGLDKEIKESLLKCQSLQREK) form a coiled coil. The interval 123–217 (DGDMDSAAEA…KGQNGSPENE (95 aa)) is disordered. The segment covering 129 to 143 (AAEASRESSVVSNSS) has biased composition (low complexity). Phosphoserine is present on serine 183. Phosphothreonine is present on threonine 185. The residue at position 188 (serine 188) is a Phosphoserine. Basic and acidic residues predominate over residues 191–203 (IEKKIARTKEFKN). Positions 204-214 (SRNGKGQNGSP) are enriched in polar residues. Residues 222 to 271 (TLYCFCQRVSFGEMVACDGPNCKYEWFHYDCVNLKEPPKGTWYCPECKIE) form a PHD-type zinc finger. 8 residues coordinate Zn(2+): cysteine 225, cysteine 227, cysteine 238, cysteine 243, histidine 249, cysteine 252, cysteine 265, and cysteine 268.

It belongs to the ING family. As to quaternary structure, interacts with H3K4me3 and to a lesser extent with H3K4me2. Component of the NuA4 histone acetyltransferase complex composed of at least ACT1, ARP4, YAF9, VID21, SWC4, EAF3, EAF5, EAF6, EAF7, EPL1, ESA1, TRA1 and YNG2.

The protein localises to the nucleus. Functionally, component of the NuA4 histone acetyltransferase complex which is involved in transcriptional activation of selected genes principally by acetylation of nucleosomal histone H4 and H2A. The NuA4 complex is also involved in DNA repair. Involved in cell cycle progression and meiosis. The chain is Chromatin modification-related protein YNG2 (YNG2) from Saccharomyces cerevisiae (strain ATCC 204508 / S288c) (Baker's yeast).